A 190-amino-acid chain; its full sequence is Elongation factor P-like protein (190 aa).

It belongs to the elongation factor P family.

This is Elongation factor P-like protein from Edwardsiella ictaluri (strain 93-146).